We begin with the raw amino-acid sequence, 340 residues long: MEQTLVIQKKKRFGFSQGIGITLLIAIVAKYLAELPFLNIMGQLVIAILIGMVWRAAIGVPHDAIAGTNFASKKLLRFGIILLGMRLNLVDIAKAGPKVLVIAAVVITFTLFVVYGLTKVFKVEKKLGILTACGTAICGAAAVVAIAPQVKAKDDETAVGAAIIAILGTIFTLIYTLLYPVLGFSPYGYGVFSGATLHEIAHVIAAAAPGGSTAVDIAVIVKLTRVTMLVPVAILIGVWFGKSEGSKEKRSWRDLPIPWFIFGFLAMSAVHSLGIIPEVVAGYIVVLAYMLIAMAMAGLGLNVEFKTFRKLGSKAFVAGLIGSVCLSVLGYVLVYALGFM.

10 helical membrane passes run 13–35 (FGFSQGIGITLLIAIVAKYLAEL), 40–59 (IMGQLVIAILIGMVWRAAIG), 99–118 (VLVIAAVVITFTLFVVYGLT), 128–150 (GILTACGTAICGAAAVVAIAPQV), 157–179 (TAVGAAIIAILGTIFTLIYTLLY), 189–211 (YGVFSGATLHEIAHVIAAAAPGG), 218–240 (AVIVKLTRVTMLVPVAILIGVWF), 255–277 (LPIPWFIFGFLAMSAVHSLGIIP), 279–301 (VVAGYIVVLAYMLIAMAMAGLGL), and 316–338 (FVAGLIGSVCLSVLGYVLVYALG).

It belongs to the UPF0324 family.

The protein resides in the cell membrane. This chain is UPF0324 membrane protein BA_5405/GBAA_5405/BAS5024, found in Bacillus anthracis.